We begin with the raw amino-acid sequence, 144 residues long: Transcriptional regulator SlyA (144 aa).

Residues 2–135 (ESPLGSDLAR…LITLIAKLEH (134 aa)) enclose the HTH marR-type domain. Residues 49–72 (QIQLAKAIGIEQPSLVRTLDQLEE) constitute a DNA-binding region (H-T-H motif).

It belongs to the SlyA family. In terms of assembly, homodimer.

Its function is as follows. Transcription regulator that can specifically activate or repress expression of target genes. In Shigella boydii serotype 18 (strain CDC 3083-94 / BS512), this protein is Transcriptional regulator SlyA.